The primary structure comprises 576 residues: RING finger and SPRY domain-containing protein 1 (576 aa).

An N-terminal signal peptide occupies residues 1-16 (MIVFGWAVFLASRSLG). A Phosphoserine modification is found at serine 50. Positions 50–99 (SGTDDSVDTQQQQAENSAVPTADTRSQPRDPVRPPRRGRGPHEPRRKKQN) are disordered. The segment covering 57–68 (DTQQQQAENSAV) has biased composition (polar residues). The segment covering 83-97 (PPRRGRGPHEPRRKK) has biased composition (basic residues). Residues 300–483 (LFLKEGRQLT…CEFNFGAKPF (184 aa)) form the B30.2/SPRY domain. Asparagine 314 carries an N-linked (GlcNAc...) asparagine glycan. The RING-type zinc-finger motif lies at 527–562 (CSLCCDEVADTQLKPCGHSDLCMDCALQLETCPLCR).

The protein localises to the secreted. This chain is RING finger and SPRY domain-containing protein 1 (RSPRY1), found in Homo sapiens (Human).